A 298-amino-acid chain; its full sequence is uncharacterized protein (298 aa).

The first 19 residues, 1–19, serve as a signal peptide directing secretion; that stretch reads MFRKFLFIQLLIVTSLVKA. A disordered region spans residues 278–298; sequence RNNPPLKNNNAKSKNSYETYK. A compositionally biased stretch (low complexity) spans 279–298; the sequence is NNPPLKNNNAKSKNSYETYK.

The protein to R.prowazekii RP296.

This is an uncharacterized protein from Rickettsia prowazekii (strain Madrid E).